The sequence spans 247 residues: Sec-independent protein translocase protein TatC (247 aa).

5 consecutive transmembrane segments (helical) span residues 21–41 (IILL…KPLI), 71–91 (AFII…WAFV), 109–129 (ITFL…FPFI), 154–174 (FLLQ…VIML), and 195–215 (FCLL…HLMI).

Belongs to the TatC family. As to quaternary structure, forms a complex with TatA.

Its subcellular location is the cell membrane. Functionally, part of the twin-arginine translocation (Tat) system that transports large folded proteins containing a characteristic twin-arginine motif in their signal peptide across membranes. The polypeptide is Sec-independent protein translocase protein TatC (Listeria innocua serovar 6a (strain ATCC BAA-680 / CLIP 11262)).